Here is a 273-residue protein sequence, read N- to C-terminus: 2,3,4,5-tetrahydropyridine-2,6-dicarboxylate N-succinyltransferase (273 aa).

Substrate contacts are provided by Arg-104 and Asp-141.

It belongs to the transferase hexapeptide repeat family. In terms of assembly, homotrimer.

Its subcellular location is the cytoplasm. The catalysed reaction is (S)-2,3,4,5-tetrahydrodipicolinate + succinyl-CoA + H2O = (S)-2-succinylamino-6-oxoheptanedioate + CoA. Its pathway is amino-acid biosynthesis; L-lysine biosynthesis via DAP pathway; LL-2,6-diaminopimelate from (S)-tetrahydrodipicolinate (succinylase route): step 1/3. The chain is 2,3,4,5-tetrahydropyridine-2,6-dicarboxylate N-succinyltransferase from Neisseria gonorrhoeae (strain ATCC 700825 / FA 1090).